The following is a 605-amino-acid chain: DNA primase (605 aa).

The CHC2-type zinc finger occupies 37–61 (CPFHADKNPSMHINPIKGFYHCFAC). The Toprim domain maps to 248–329 (KEIIVCEGYM…DGKVAILQGG (82 aa)). The Mg(2+) site is built by Glu254, Asp298, and Asp300.

It belongs to the DnaG primase family. As to quaternary structure, monomer. Interacts with DnaB. It depends on Zn(2+) as a cofactor. The cofactor is Mg(2+).

The enzyme catalyses ssDNA + n NTP = ssDNA/pppN(pN)n-1 hybrid + (n-1) diphosphate.. Functionally, RNA polymerase that catalyzes the synthesis of short RNA molecules used as primers for DNA polymerase during DNA replication. In Campylobacter jejuni subsp. jejuni serotype O:2 (strain ATCC 700819 / NCTC 11168), this protein is DNA primase.